A 292-amino-acid chain; its full sequence is Aquaporin-3 (292 aa).

Residues 1 to 24 (MGRQKELMNRCGEMLHIRYRLLRQ) lie on the Cytoplasmic side of the membrane. A helical transmembrane segment spans residues 25-42 (ALAECLGTLILVMFGCGS). Topologically, residues 43–56 (VAQVVLSRGTHGGF) are extracellular. A helical membrane pass occupies residues 57–74 (LTINLAFGFAVTLAILVA). The Cytoplasmic portion of the chain corresponds to 75–78 (GQVS). The discontinuously helical intramembrane region spans 79-92 (GAHLNPAVTFAMCF). The NPA 1 motif lies at 83-85 (NPA). The Cytoplasmic portion of the chain corresponds to 93-100 (LAREPWIK). The chain crosses the membrane as a helical span at residues 101–121 (LPIYTLAQTLGAFLGAGIVFG). The Extracellular segment spans residues 122–159 (LYYDAIWAFAGNELVVSGPNGTAGIFATYPSGHLDMVN). An N-linked (GlcNAc...) asparagine glycan is attached at Asn-141. The chain crosses the membrane as a helical span at residues 160 to 177 (GFFDQFIGTAALIVCVLA). The Cytoplasmic portion of the chain corresponds to 178–189 (IVDPYNNPVPRG). Residues 190–206 (LEAFTVGLVVLVIGTSM) form a helical membrane-spanning segment. The Extracellular portion of the chain corresponds to 207–210 (GFNS). An intramembrane region (discontinuously helical) is located at residues 211–224 (GYAVNPARDFGPRL). The short motif at 215-217 (NPA) is the NPA 2 element. The Extracellular segment spans residues 225–242 (FTALAGWGSEVFTTGQNW). Residues 243–264 (WWVPIVSPLLGSIGGVFVYQLM) form a helical membrane-spanning segment. Residues 265–292 (IGCHLEQPPPSTEAENVKLAHMKHKEQI) are Cytoplasmic-facing.

The protein belongs to the MIP/aquaporin (TC 1.A.8) family. In terms of assembly, homotetramer; each monomer provides an independent glycerol/water pore. Could also exist in other oligomeric states. As to expression, detected in kidney medulla and papilla, in collecting duct cells. Detected in colon.

The protein resides in the cell membrane. It localises to the basolateral cell membrane. The catalysed reaction is glycerol(in) = glycerol(out). The enzyme catalyses H2O(in) = H2O(out). It carries out the reaction urea(in) = urea(out). It catalyses the reaction H2O2(out) = H2O2(in). Its activity is regulated as follows. Channel activity is inhibited by mercury ions. Its function is as follows. Aquaglyceroporins form homotetrameric transmembrane channels, with each monomer independently mediating glycerol and water transport across the plasma membrane along their osmotic gradient. Could also be permeable to urea. Also participates in cell permeability to H2O2 and H2O2-mediated signaling. In skin, transports glycerol to the epidermis and stratum corneum, where it maintains hydration, elasticity, and supports lipid biosynthesis for barrier repair. In kidney, contributes to the reabsorption of water, helping the body maintain proper fluid balance. This Rattus norvegicus (Rat) protein is Aquaporin-3.